Reading from the N-terminus, the 56-residue chain is Large ribosomal subunit protein bL32 (56 aa).

Basic residues predominate over residues Met-1–Arg-16. Residues Met-1 to Leu-22 are disordered.

This sequence belongs to the bacterial ribosomal protein bL32 family.

In Aliivibrio salmonicida (strain LFI1238) (Vibrio salmonicida (strain LFI1238)), this protein is Large ribosomal subunit protein bL32.